Reading from the N-terminus, the 706-residue chain is Drebrin (706 aa).

Position 2 is an N-acetylalanine (alanine 2). Positions 3–134 (GVSFSGHRLE…DAGAIGQRLS (132 aa)) constitute an ADF-H domain. Residues serine 141 and serine 142 each carry the phosphoserine modification. Over residues 209 to 236 (ERMEQERQEQEERERRYREREQQIEEHR) the composition is skewed to basic and acidic residues. The segment at 209–497 (ERMEQERQEQ…AEPAASVTSV (289 aa)) is disordered. A Phosphoserine modification is found at serine 241. A compositionally biased stretch (basic and acidic residues) spans 288–298 (DNPREFFRQQE). The segment covering 331-345 (SDSGPSSSSSSSSSP) has biased composition (low complexity). Position 344 is a phosphoserine (serine 344). The span at 357–366 (RTPNLSSSLP) shows a compositional bias: polar residues. Phosphothreonine is present on residues threonine 379 and threonine 383. Residues 382–396 (PTRSPSDSSTASTPI) show a composition bias toward polar residues. Serine 385, serine 387, and serine 393 each carry phosphoserine. A Phosphothreonine modification is found at threonine 394. Residues 411-422 (QPPPPPPPPPPT) show a composition bias toward pro residues. Residues 453–497 (AAEPPQAQEPPLLQSSPLEDSMCTESPEQAALAAPAEPAASVTSV) show a composition bias toward low complexity. Serine 468 carries the phosphoserine modification. Threonine 550 bears the Phosphothreonine mark. The interval 633-677 (EPHLLTNGETTQKEGTQASEGYFSQSQEEEFAQSEEPCAKVPPPV) is disordered. Over residues 639–651 (NGETTQKEGTQAS) the composition is skewed to polar residues. Serine 658 bears the Phosphoserine mark.

Interacts with RUFY3. Interacts with CXCR4; this interaction is enhanced by antigenic stimulation. Interacts (via ADF-H domain) with ZMYND8 (via N-terminus); the interaction leads to sequestering of ZMYND8 in the cytoplasm. Expressed in the hippocampus, with expression in the pyramidal cells of CA1, CA2 and CA3 and in the granule cells of the dentate gyrus (at protein level). Highly expressed in brain, also present in stomach and to a lesser degree in kidney, colon, and urinary bladder. The E2 isoform is specifically expressed in adult stomach, kidney, and cultured cells.

The protein resides in the cytoplasm. It is found in the cell projection. It localises to the dendrite. The protein localises to the cell cortex. Its subcellular location is the cell junction. The protein resides in the growth cone. In terms of biological role, actin cytoskeleton-organizing protein that plays a role in the formation of cell projections. Required for actin polymerization at immunological synapses (IS) and for the recruitment of the chemokine receptor CXCR4 to IS. Plays a role in dendritic spine morphogenesis and organization, including the localization of the dopamine receptor DRD1 to the dendritic spines. Involved in memory-related synaptic plasticity in the hippocampus. This is Drebrin (Dbn1) from Mus musculus (Mouse).